Consider the following 245-residue polypeptide: Transcriptional regulatory protein YpdB (245 aa).

Positions 2–116 constitute a Response regulatory domain; that stretch reads KVIIVEDEFL…RITGMLQKLE (115 aa). Asp-53 bears the 4-aspartylphosphate mark. The region spanning 140–245 is the HTH LytTR-type domain; sequence INLVKDERII…VKEFRQLMHL (106 aa).

In terms of processing, phosphorylated by YpdA.

It localises to the cytoplasm. Functionally, member of the two-component regulatory system YpdA/YpdB. YpdB regulates expression of yhjX by binding to its promoter region. This is Transcriptional regulatory protein YpdB (ypdB) from Escherichia coli O6:H1 (strain CFT073 / ATCC 700928 / UPEC).